Reading from the N-terminus, the 375-residue chain is Neuropeptide Y receptor type 4-2 (375 aa).

The Extracellular portion of the chain corresponds to 1–39; that stretch reads MNTSHLLALLLPKSPQGENRSKPLGTPYNFSEHCQDSVD. N-linked (GlcNAc...) asparagine glycosylation is found at Asn-2, Asn-19, and Asn-29. The helical transmembrane segment at 40–60 threads the bilayer; it reads VMVFIVTSYSIETVVGVLGNL. Over 61–87 the chain is Cytoplasmic; it reads CLMCVTVRQKEKANVTNLLIANLAFSD. A helical membrane pass occupies residues 88–108; it reads FLMCLLCQPLTAVYTIMDYWI. Residues 109-116 lie on the Extracellular side of the membrane; it reads FGETLCKM. Residues Cys-114 and Cys-201 are joined by a disulfide bond. Residues 117-137 form a helical membrane-spanning segment; that stretch reads SAFIQCMSVTVSILSLVLVAL. The Cytoplasmic portion of the chain corresponds to 138 to 155; it reads ERHQLIINPTGWKPSISQ. A helical transmembrane segment spans residues 156–176; that stretch reads AYLGIVLIWVIACVLSLPFLA. The Extracellular segment spans residues 177-212; it reads NSILENVFHKNHSKALEFLADKVVCTESWPLAHHRT. Asn-187 carries N-linked (GlcNAc...) asparagine glycosylation. Residues 213–233 traverse the membrane as a helical segment; the sequence is IYTTFLLLFQYCLPLGFILVC. The Cytoplasmic portion of the chain corresponds to 234–263; it reads YARIYRRLQRQGRVFHKGTYSLRAGHMKQV. Residues 264–284 traverse the membrane as a helical segment; sequence NVVLVVMVVAFAVLWLPLHVF. Residues 285-301 are Extracellular-facing; that stretch reads NSLEDWHHEAIPICHGN. Residues 302-322 traverse the membrane as a helical segment; the sequence is LIFLVCHLLAMASTCVNPFIY. The Cytoplasmic segment spans residues 323-375; that stretch reads GFLNTNFKKEIKALVLTCQQSAPLEESEHLPLSTVHTEVSKGSLRLSGRSNPI. Cys-340 carries S-palmitoyl cysteine lipidation.

It belongs to the G-protein coupled receptor 1 family.

The protein resides in the cell membrane. G protein-coupled receptor for PPY/pancreatic polypeptide/PP, NPY/neuropeptide Y and PYY/peptide YY that is negatively coupled to cAMP. The rank order of affinity for these polypeptides and their derivatives is PP, PP (2-36) and [Ile-31, Gln-34] PP &gt; [Pro-34] PYY &gt; PYY and [Leu-31, Pro-34] NPY &gt; NPY &gt; PYY (3-36) and NPY (2-36) &gt; PP (13-36) &gt; PP (31-36) &gt; NPY free acid. In Homo sapiens (Human), this protein is Neuropeptide Y receptor type 4-2.